The following is a 451-amino-acid chain: Tryptophan--tRNA ligase (451 aa).

ATP-binding positions include 10–12 (TTT) and 18–19 (GN). Positions 11–19 (TTGTPHLGN) match the 'HIGH' region motif. An L-tryptophan-binding site is contributed by Asp143. ATP-binding positions include 155 to 157 (GRD), Leu195, and 202 to 206 (KMSKS). Residues 202-206 (KMSKS) carry the 'KMSKS' region motif.

This sequence belongs to the class-I aminoacyl-tRNA synthetase family. In terms of assembly, homodimer.

It is found in the cytoplasm. It catalyses the reaction tRNA(Trp) + L-tryptophan + ATP = L-tryptophyl-tRNA(Trp) + AMP + diphosphate + H(+). Functionally, catalyzes the attachment of tryptophan to tRNA(Trp). This is Tryptophan--tRNA ligase from Bordetella bronchiseptica (strain ATCC BAA-588 / NCTC 13252 / RB50) (Alcaligenes bronchisepticus).